A 66-amino-acid chain; its full sequence is Protein translocase subunit SecE (66 aa).

The chain crosses the membrane as a helical span at residues 34-54; that stretch reads LVVIVAVFVFSLICLVLDYGI.

This sequence belongs to the SecE/SEC61-gamma family. In terms of assembly, component of the Sec protein translocase complex. Heterotrimer consisting of SecY, SecE and SecG subunits. The heterotrimers can form oligomers, although 1 heterotrimer is thought to be able to translocate proteins. Interacts with the ribosome. Interacts with SecDF, and other proteins may be involved. Interacts with SecA.

The protein localises to the cell inner membrane. Its function is as follows. Essential subunit of the Sec protein translocation channel SecYEG. Clamps together the 2 halves of SecY. May contact the channel plug during translocation. This is Protein translocase subunit SecE from Rickettsia bellii (strain RML369-C).